We begin with the raw amino-acid sequence, 322 residues long: Protein-L-isoaspartate O-methyltransferase (322 aa).

Positions 1–101 (MSGERAKRFP…AKQGDRSAAP (101 aa)) are disordered. Residues 14-29 (EDLKREPRKPEGRVAE) show a composition bias toward basic and acidic residues. Composition is skewed to low complexity over residues 33 to 51 (AGDA…PAAA) and 67 to 91 (AANP…PQGG). The active site involves serine 170.

Belongs to the methyltransferase superfamily. L-isoaspartyl/D-aspartyl protein methyltransferase family.

Its subcellular location is the cytoplasm. It catalyses the reaction [protein]-L-isoaspartate + S-adenosyl-L-methionine = [protein]-L-isoaspartate alpha-methyl ester + S-adenosyl-L-homocysteine. Catalyzes the methyl esterification of L-isoaspartyl residues in peptides and proteins that result from spontaneous decomposition of normal L-aspartyl and L-asparaginyl residues. It plays a role in the repair and/or degradation of damaged proteins. In Burkholderia pseudomallei (strain 668), this protein is Protein-L-isoaspartate O-methyltransferase.